A 337-amino-acid polypeptide reads, in one-letter code: Probable dual-specificity RNA methyltransferase RlmN (337 aa).

The active-site Proton acceptor is Glu88. A Radical SAM core domain is found at 94-324 (SEKRLTVCVS…VRYSRGLATD (231 aa)). A disulfide bond links Cys101 and Cys327. 3 residues coordinate [4Fe-4S] cluster: Cys108, Cys112, and Cys115. S-adenosyl-L-methionine is bound by residues 155 to 156 (GE), Ser185, 208 to 210 (SLH), and Asn284. Cys327 serves as the catalytic S-methylcysteine intermediate.

This sequence belongs to the radical SAM superfamily. RlmN family. Requires [4Fe-4S] cluster as cofactor.

The protein resides in the cytoplasm. It catalyses the reaction adenosine(2503) in 23S rRNA + 2 reduced [2Fe-2S]-[ferredoxin] + 2 S-adenosyl-L-methionine = 2-methyladenosine(2503) in 23S rRNA + 5'-deoxyadenosine + L-methionine + 2 oxidized [2Fe-2S]-[ferredoxin] + S-adenosyl-L-homocysteine. The enzyme catalyses adenosine(37) in tRNA + 2 reduced [2Fe-2S]-[ferredoxin] + 2 S-adenosyl-L-methionine = 2-methyladenosine(37) in tRNA + 5'-deoxyadenosine + L-methionine + 2 oxidized [2Fe-2S]-[ferredoxin] + S-adenosyl-L-homocysteine. Its function is as follows. Specifically methylates position 2 of adenine 2503 in 23S rRNA and position 2 of adenine 37 in tRNAs. This is Probable dual-specificity RNA methyltransferase RlmN from Microcystis aeruginosa (strain NIES-843 / IAM M-2473).